A 95-amino-acid chain; its full sequence is Glutamyl-tRNA(Gln) amidotransferase subunit C 1 (95 aa).

It belongs to the GatC family. In terms of assembly, heterotrimer of A, B and C subunits.

It catalyses the reaction L-glutamyl-tRNA(Gln) + L-glutamine + ATP + H2O = L-glutaminyl-tRNA(Gln) + L-glutamate + ADP + phosphate + H(+). It carries out the reaction L-aspartyl-tRNA(Asn) + L-glutamine + ATP + H2O = L-asparaginyl-tRNA(Asn) + L-glutamate + ADP + phosphate + 2 H(+). Allows the formation of correctly charged Asn-tRNA(Asn) or Gln-tRNA(Gln) through the transamidation of misacylated Asp-tRNA(Asn) or Glu-tRNA(Gln) in organisms which lack either or both of asparaginyl-tRNA or glutaminyl-tRNA synthetases. The reaction takes place in the presence of glutamine and ATP through an activated phospho-Asp-tRNA(Asn) or phospho-Glu-tRNA(Gln). The chain is Glutamyl-tRNA(Gln) amidotransferase subunit C 1 (gatC1) from Clostridium acetobutylicum (strain ATCC 824 / DSM 792 / JCM 1419 / IAM 19013 / LMG 5710 / NBRC 13948 / NRRL B-527 / VKM B-1787 / 2291 / W).